A 186-amino-acid polypeptide reads, in one-letter code: Hydra actinoporin-like toxin 5 (186 aa).

An N-terminal signal peptide occupies residues 1 to 20 (MLLYVCLVNLLLQSPSGVDS). Positions 158–160 (RDG) match the Cell attachment site motif.

This sequence belongs to the actinoporin family. HALT subfamily. As to quaternary structure, octamer or nonamer in membranes. Monomer in the soluble state. In vitro, interacts with folate receptor alpha (of target organism).

The protein localises to the nematocyst. Its subcellular location is the secreted. The protein resides in the target cell membrane. Pore-forming protein that forms hydrophilic pores and causes cytolysis. Compared to equinatoxin-2 (AC P61914), it reveals lower cytolysis activity (5-12-fold difference, tested on erythrocytes), a larger pore size (probably 2-3 nm) and different affinity to membrane lipids (100-fold lower affinity to sphingomyelin). Binds to sulfatides (SFT) as well as to the two sphingolipids, lysophosphatidic acid (LPA) and sphingosine-1-phosphate (S1P). It seems to bind more strongly to LPA than to S1P and SFT. Shows cytolytic activity on HeLa cells, with a different potency than its paralogs (from most potent to less potent: HALT-4&gt;HALT-6~HALT-1&gt;HALT-3&gt;HALT-7&gt;HALT-2). Pore formation is a multi-step process that involves specific recognition of membrane lipid by a protein aromatic residues rich region, firm binding to the membrane (mainly driven by hydrophobic interactions) accompanied by the transfer of the N-terminal region to the lipid-water interface and finally pore formation after oligomerization of monomers. In vitro, binds to the folate receptor alpha (FOLR1), a GPI-anchored membrane protein that plays a major role in the uptake of folate/folic acid into cells via endocytosis, suggesting a possible involvement of this receptor in the mechanism of HALT-1-induced cell lysis. In vivo, does not cause visible paralysis in larvae of the blowfly Sarcophaga faculata, the most common arthropod prey of Hydra. The chain is Hydra actinoporin-like toxin 5 from Hydra vulgaris (Hydra).